The following is a 480-amino-acid chain: tRNA (guanine(37)-N(1))-methyltransferase (480 aa).

The N-terminal 18 residues, 1–18 (MAAVWRRSARLFILLQRH), are a transit peptide targeting the mitochondrion. S-adenosyl-L-methionine is bound by residues His-273, 311-312 (DL), 339-340 (DG), and Asn-367. A disordered region spans residues 458 to 480 (HTQDRDTSEEPCPKKQKCEDSTN).

Belongs to the class I-like SAM-binding methyltransferase superfamily. TRM5/TYW2 family. In terms of assembly, monomer.

The protein localises to the mitochondrion matrix. The protein resides in the nucleus. It is found in the cytoplasm. It carries out the reaction guanosine(37) in tRNA + S-adenosyl-L-methionine = N(1)-methylguanosine(37) in tRNA + S-adenosyl-L-homocysteine + H(+). Functionally, involved in mitochondrial tRNA methylation. Specifically methylates the N1 position of guanosine-37 in various tRNAs. Methylation is not dependent on the nature of the nucleoside 5' of the target nucleoside. This is the first step in the biosynthesis of wybutosine (yW), a modified base adjacent to the anticodon of tRNAs and required for accurate decoding. This Danio rerio (Zebrafish) protein is tRNA (guanine(37)-N(1))-methyltransferase (trmt5).